A 293-amino-acid polypeptide reads, in one-letter code: 4-hydroxy-tetrahydrodipicolinate synthase (293 aa).

Thr-44 is a binding site for pyruvate. Catalysis depends on Tyr-132, which acts as the Proton donor/acceptor. Lys-161 (schiff-base intermediate with substrate) is an active-site residue. Position 205 (Ile-205) interacts with pyruvate.

This sequence belongs to the DapA family. In terms of assembly, homotetramer; dimer of dimers.

It localises to the cytoplasm. The catalysed reaction is L-aspartate 4-semialdehyde + pyruvate = (2S,4S)-4-hydroxy-2,3,4,5-tetrahydrodipicolinate + H2O + H(+). It functions in the pathway amino-acid biosynthesis; L-lysine biosynthesis via DAP pathway; (S)-tetrahydrodipicolinate from L-aspartate: step 3/4. Functionally, catalyzes the condensation of (S)-aspartate-beta-semialdehyde [(S)-ASA] and pyruvate to 4-hydroxy-tetrahydrodipicolinate (HTPA). This chain is 4-hydroxy-tetrahydrodipicolinate synthase, found in Thermosipho africanus (strain TCF52B).